A 341-amino-acid polypeptide reads, in one-letter code: Malate dehydrogenase 2, mitochondrial (341 aa).

The N-terminal 22 residues, 1-22 (MFRSMIVRSASPVKQGLLRRGF), are a transit peptide targeting the mitochondrion. NAD(+) contacts are provided by residues 36 to 42 (GAAGGIG) and Asp62. Substrate contacts are provided by Arg109 and Arg115. NAD(+) contacts are provided by residues Asn122 and 145–147 (ISN). Substrate contacts are provided by Asn147 and Arg181. His205 acts as the Proton acceptor in catalysis. Residue Met256 participates in NAD(+) binding.

Belongs to the LDH/MDH superfamily. MDH type 1 family. Homodimer. Expressed in rosette leaves at low levels.

It localises to the mitochondrion matrix. It carries out the reaction (S)-malate + NAD(+) = oxaloacetate + NADH + H(+). In terms of biological role, catalyzes a reversible NAD-dependent dehydrogenase reaction involved in central metabolism and redox homeostasis between organelle compartments. Required for carbon dioxide and energy partitioning in leaves. May limit photorespiration during the dark phase. Can convert 2-ketoglutarate to L-2-hydroxyglutarate in vitro. This is Malate dehydrogenase 2, mitochondrial from Arabidopsis thaliana (Mouse-ear cress).